The following is a 321-amino-acid chain: Glycerol-3-phosphate dehydrogenase [NAD(P)+] (321 aa).

Residues Ser-14, Phe-15, Arg-35, and Lys-109 each contribute to the NADPH site. Sn-glycerol 3-phosphate is bound by residues Lys-109 and Gly-137. An NADPH-binding site is contributed by Ala-141. 5 residues coordinate sn-glycerol 3-phosphate: Lys-192, Asp-252, Ser-262, Arg-263, and Asn-264. Catalysis depends on Lys-192, which acts as the Proton acceptor. Arg-263 lines the NADPH pocket. The NADPH site is built by Leu-287 and Glu-289.

This sequence belongs to the NAD-dependent glycerol-3-phosphate dehydrogenase family.

The protein localises to the cytoplasm. The enzyme catalyses sn-glycerol 3-phosphate + NAD(+) = dihydroxyacetone phosphate + NADH + H(+). The catalysed reaction is sn-glycerol 3-phosphate + NADP(+) = dihydroxyacetone phosphate + NADPH + H(+). It participates in membrane lipid metabolism; glycerophospholipid metabolism. Functionally, catalyzes the reduction of the glycolytic intermediate dihydroxyacetone phosphate (DHAP) to sn-glycerol 3-phosphate (G3P), the key precursor for phospholipid synthesis. This chain is Glycerol-3-phosphate dehydrogenase [NAD(P)+], found in Rickettsia felis (strain ATCC VR-1525 / URRWXCal2) (Rickettsia azadi).